We begin with the raw amino-acid sequence, 480 residues long: NADH-quinone oxidoreductase subunit N (480 aa).

Transmembrane regions (helical) follow at residues 13 to 33 (ISPM…QFLI), 41 to 61 (PLWV…YHTT), 81 to 101 (VWLS…APPF), 107 to 127 (TLFP…MFLT), 132 to 152 (LIVI…MIGM), 167 to 187 (FLLG…LYGG), 212 to 232 (LGLG…PFHS), 245 to 265 (ITGF…IILF), 276 to 296 (VWKY…NIVA), 314 to 334 (AGYI…YYLF), 373 to 393 (ALAL…IGFW), 413 to 433 (LLFG…KITI), and 454 to 474 (PTLG…WIFF).

It belongs to the complex I subunit 2 family. NDH-1 is composed of 14 different subunits. Subunits NuoA, H, J, K, L, M, N constitute the membrane sector of the complex.

The protein localises to the cell inner membrane. The enzyme catalyses a quinone + NADH + 5 H(+)(in) = a quinol + NAD(+) + 4 H(+)(out). NDH-1 shuttles electrons from NADH, via FMN and iron-sulfur (Fe-S) centers, to quinones in the respiratory chain. The immediate electron acceptor for the enzyme in this species is believed to be ubiquinone. Couples the redox reaction to proton translocation (for every two electrons transferred, four hydrogen ions are translocated across the cytoplasmic membrane), and thus conserves the redox energy in a proton gradient. The protein is NADH-quinone oxidoreductase subunit N of Leptospira biflexa serovar Patoc (strain Patoc 1 / Ames).